Reading from the N-terminus, the 121-residue chain is Small ribosomal subunit protein uS13 (121 aa).

A disordered region spans residues 92–121 (RKGLPVRGQSSKTNARTVKGPRKTVANKKK). The segment covering 110-121 (KGPRKTVANKKK) has biased composition (basic residues).

The protein belongs to the universal ribosomal protein uS13 family. Part of the 30S ribosomal subunit. Forms a loose heterodimer with protein S19. Forms two bridges to the 50S subunit in the 70S ribosome.

Functionally, located at the top of the head of the 30S subunit, it contacts several helices of the 16S rRNA. In the 70S ribosome it contacts the 23S rRNA (bridge B1a) and protein L5 of the 50S subunit (bridge B1b), connecting the 2 subunits; these bridges are implicated in subunit movement. Contacts the tRNAs in the A and P-sites. This Mycoplasma capricolum subsp. capricolum (strain California kid / ATCC 27343 / NCTC 10154) protein is Small ribosomal subunit protein uS13.